Consider the following 60-residue polypeptide: Large ribosomal subunit protein bL33 (60 aa).

This sequence belongs to the bacterial ribosomal protein bL33 family.

The polypeptide is Large ribosomal subunit protein bL33 (Chlorobium luteolum (strain DSM 273 / BCRC 81028 / 2530) (Pelodictyon luteolum)).